The primary structure comprises 160 residues: Putative UPF0479 protein YIL177W-A (160 aa).

Helical transmembrane passes span 39–59 (IVFC…KVLQ) and 136–156 (VPMI…ISQH).

It belongs to the UPF0479 family.

It is found in the membrane. This chain is Putative UPF0479 protein YIL177W-A, found in Saccharomyces cerevisiae (strain ATCC 204508 / S288c) (Baker's yeast).